A 178-amino-acid chain; its full sequence is ATP synthase subunit delta (178 aa).

The protein belongs to the ATPase delta chain family. In terms of assembly, F-type ATPases have 2 components, F(1) - the catalytic core - and F(0) - the membrane proton channel. F(1) has five subunits: alpha(3), beta(3), gamma(1), delta(1), epsilon(1). F(0) has three main subunits: a(1), b(2) and c(10-14). The alpha and beta chains form an alternating ring which encloses part of the gamma chain. F(1) is attached to F(0) by a central stalk formed by the gamma and epsilon chains, while a peripheral stalk is formed by the delta and b chains.

Its subcellular location is the cell inner membrane. F(1)F(0) ATP synthase produces ATP from ADP in the presence of a proton or sodium gradient. F-type ATPases consist of two structural domains, F(1) containing the extramembraneous catalytic core and F(0) containing the membrane proton channel, linked together by a central stalk and a peripheral stalk. During catalysis, ATP synthesis in the catalytic domain of F(1) is coupled via a rotary mechanism of the central stalk subunits to proton translocation. In terms of biological role, this protein is part of the stalk that links CF(0) to CF(1). It either transmits conformational changes from CF(0) to CF(1) or is implicated in proton conduction. This Methylococcus capsulatus (strain ATCC 33009 / NCIMB 11132 / Bath) protein is ATP synthase subunit delta.